A 351-amino-acid polypeptide reads, in one-letter code: Mitogen-activated protein kinase 2 (351 aa).

The 289-residue stretch at 16 to 304 (YEILDVIGEG…AEEALQHNYL (289 aa)) folds into the Protein kinase domain. ATP contacts are provided by residues 22–30 (IGEGAYGIV) and K45. Residue D140 is the Proton acceptor of the active site. Phosphothreonine is present on T176. The TXY signature appears at 176–178 (TEY). The residue at position 178 (Y178) is a Phosphotyrosine.

It belongs to the protein kinase superfamily. CMGC Ser/Thr protein kinase family. MAP kinase subfamily. The cofactor is Mg(2+). It depends on Mn(2+) as a cofactor. Dually phosphorylated on Thr-176 and Tyr-178, which activates the enzyme.

It is found in the nucleus. The enzyme catalyses L-seryl-[protein] + ATP = O-phospho-L-seryl-[protein] + ADP + H(+). It carries out the reaction L-threonyl-[protein] + ATP = O-phospho-L-threonyl-[protein] + ADP + H(+). Activated by tyrosine and threonine phosphorylation. Inhibited by the MEK inhibitor U0126 but not by the p38 inhibitor SB203580. Cobalt abolishes kinase activity, while calcium, copper and nickel have little effect on kinase activity. In terms of biological role, serine-threonine protein kinase which may be involved in pheromone signaling. Functionally complements the MAPK pheromone signaling pathway in S.cerevisiae. In Pneumocystis carinii, this protein is Mitogen-activated protein kinase 2.